We begin with the raw amino-acid sequence, 322 residues long: Mas-related G-protein coupled receptor member X1 (322 aa).

Residues 1–30 (MDPTISSHDTESTPLNETGHPNCTPILTLS) are Extracellular-facing. An N-linked (GlcNAc...) asparagine glycan is attached at Asn-16. The helical transmembrane segment at 31–51 (FLVLITTLVGLAGNTIVLWLL) threads the bilayer. Over 52-59 (GFRMRRKA) the chain is Cytoplasmic. A helical transmembrane segment spans residues 60-80 (ISVYILNLALADSFFLCCHFI). Over 81–100 (DSLLRIIDFYGLYAHKLSKD) the chain is Extracellular. A helical membrane pass occupies residues 101 to 121 (ILGNAAIIPYISGLSILSAIS). The Cytoplasmic portion of the chain corresponds to 122–142 (TERCLCVLWPIWYHCHRPRNM). Residues 143-163 (SAIICALIWVLSFLMGILDWF) form a helical membrane-spanning segment. Over 164–179 (SGFLGETHHHLWKNVD) the chain is Extracellular. A helical transmembrane segment spans residues 180 to 200 (FIITAFLIFLFMLLSGSSLAL). Over 201-223 (LLRILCGPRRKPLSRLYVTIALT) the chain is Cytoplasmic. Residues 224 to 244 (VMVYLICGLPLGLYLFLLYWF) form a helical membrane-spanning segment. The Extracellular portion of the chain corresponds to 245–257 (GVHLHYPFCHIYQ). Residues 258–278 (VTAVLSCVNSSANPIIYFLVG) form a helical membrane-spanning segment. Residues 279 to 322 (SFRQHRKHRSLKRVLKRALEDTPEEDEYTDSHLHKTTEISESRY) lie on the Cytoplasmic side of the membrane.

This sequence belongs to the G-protein coupled receptor 1 family. Mas subfamily. Expressed in a subset of IB4-positive small diameter nociceptive dorsal root neurons.

It is found in the cell membrane. Orphan receptor activated by neuropeptides terminating in Arg-Phe or Arg-Phe-amide. Mediates its action by association with G proteins that activate a phosphatidylinositol-calcium second messenger system. Its effect is mediated by G(q) and G(11) proteins. May regulate the function of nociceptive neurons by modulation of pain perception. The chain is Mas-related G-protein coupled receptor member X1 from Mus musculus (Mouse).